The primary structure comprises 163 residues: Shikimate kinase (163 aa).

Position 10–15 (10–15 (GVGKTT)) interacts with ATP. Residue Thr14 participates in Mg(2+) binding. Residues Asp28, Arg52, and Gly75 each contribute to the substrate site. Arg116 provides a ligand contact to ATP. Arg134 serves as a coordination point for substrate. Arg151 lines the ATP pocket.

Belongs to the shikimate kinase family. Monomer. Mg(2+) is required as a cofactor.

It is found in the cytoplasm. The catalysed reaction is shikimate + ATP = 3-phosphoshikimate + ADP + H(+). It participates in metabolic intermediate biosynthesis; chorismate biosynthesis; chorismate from D-erythrose 4-phosphate and phosphoenolpyruvate: step 5/7. Its function is as follows. Catalyzes the specific phosphorylation of the 3-hydroxyl group of shikimic acid using ATP as a cosubstrate. This is Shikimate kinase from Streptococcus pyogenes serotype M12 (strain MGAS2096).